The chain runs to 122 residues: Small ribosomal subunit protein uS12cz/uS12cy (122 aa).

It belongs to the universal ribosomal protein uS12 family. In terms of assembly, part of the 30S ribosomal subunit.

The protein resides in the plastid. It localises to the chloroplast. With S4 and S5 plays an important role in translational accuracy. Located at the interface of the 30S and 50S subunits. This chain is Small ribosomal subunit protein uS12cz/uS12cy (rps12-A), found in Triticum aestivum (Wheat).